The following is a 303-amino-acid chain: uncharacterized protein (303 aa).

The S4 RNA-binding domain maps to 15 to 74 (ERIDKFLASTENDWSRTQVQQWVKDGQVVVNGSAVKANYKIQPGDQVTVTVPEPEALDVL). Residue D138 is part of the active site.

Belongs to the pseudouridine synthase RluA family.

The catalysed reaction is a uridine in RNA = a pseudouridine in RNA. This is an uncharacterized protein from Bacillus subtilis (strain 168).